A 292-amino-acid polypeptide reads, in one-letter code: 3-methyl-2-oxobutanoate hydroxymethyltransferase 2 (292 aa).

Residues aspartate 52 and aspartate 91 each contribute to the Mg(2+) site. 3-methyl-2-oxobutanoate is bound by residues 52-53 (DS), aspartate 91, and lysine 120. Glutamate 122 lines the Mg(2+) pocket. The active-site Proton acceptor is glutamate 189.

The protein belongs to the PanB family. Homodecamer; pentamer of dimers. Mg(2+) serves as cofactor.

The protein resides in the cytoplasm. It catalyses the reaction 3-methyl-2-oxobutanoate + (6R)-5,10-methylene-5,6,7,8-tetrahydrofolate + H2O = 2-dehydropantoate + (6S)-5,6,7,8-tetrahydrofolate. It functions in the pathway cofactor biosynthesis; (R)-pantothenate biosynthesis; (R)-pantoate from 3-methyl-2-oxobutanoate: step 1/2. Functionally, catalyzes the reversible reaction in which hydroxymethyl group from 5,10-methylenetetrahydrofolate is transferred onto alpha-ketoisovalerate to form ketopantoate. The sequence is that of 3-methyl-2-oxobutanoate hydroxymethyltransferase 2 from Bradyrhizobium diazoefficiens (strain JCM 10833 / BCRC 13528 / IAM 13628 / NBRC 14792 / USDA 110).